Consider the following 569-residue polypeptide: Myotubularin-related protein 9 (569 aa).

A Myotubularin phosphatase domain is found at 134-513 (GWSAFDLEQE…QCIKIWDRLF (380 aa)).

Belongs to the protein-tyrosine phosphatase family. Non-receptor class myotubularin subfamily. Heterodimer with lipid phosphatase mtm-6.

The protein localises to the cytoplasm. Its subcellular location is the membrane. Its function is as follows. May act as a regulatory subunit for mtm-6. In association with phosphatase mtm-6, plays a role in endosome trafficking probably by regulating phosphatidylinositol-3-phosphate levels. Regulates fluid phase endocytosis in coelomocytes. Regulates posterior migration of QL neuroblast descendants and the anterior migration of QR neuroblast descendants and HSN neurons during larval development probably by controlling Wnt ligand secretion through the regulation of sorting receptor mig-14 trafficking. Involved in the formation of correct synapse number in DA9 motor neurons. The chain is Myotubularin-related protein 9 from Caenorhabditis elegans.